The following is a 148-amino-acid chain: Hydrogenase expression/formation protein HoxO (148 aa).

Positions 128 to 148 are disordered; it reads IPVLSPESGTPSCSPMETSES. The span at 134 to 148 shows a compositional bias: polar residues; the sequence is ESGTPSCSPMETSES.

The protein belongs to the HupG/HyaE family.

In Azotobacter vinelandii, this protein is Hydrogenase expression/formation protein HoxO (hoxO).